A 184-amino-acid polypeptide reads, in one-letter code: NADH dehydrogenase [ubiquinone] 1 alpha subcomplex assembly factor 3 (184 aa).

It belongs to the NDUFAF3 family. Interacts with NDUFAF4, NDUFS2 and NDUFS3.

The protein resides in the nucleus. It is found in the mitochondrion inner membrane. In terms of biological role, essential factor for the assembly of mitochondrial NADH:ubiquinone oxidoreductase complex (complex I). This chain is NADH dehydrogenase [ubiquinone] 1 alpha subcomplex assembly factor 3 (NDUFAF3), found in Homo sapiens (Human).